A 258-amino-acid polypeptide reads, in one-letter code: tRNA pseudouridine synthase A (258 aa).

Asp52 functions as the Nucleophile in the catalytic mechanism. Tyr110 contributes to the substrate binding site.

It belongs to the tRNA pseudouridine synthase TruA family. Homodimer.

The catalysed reaction is uridine(38/39/40) in tRNA = pseudouridine(38/39/40) in tRNA. Functionally, formation of pseudouridine at positions 38, 39 and 40 in the anticodon stem and loop of transfer RNAs. The polypeptide is tRNA pseudouridine synthase A (Francisella tularensis subsp. mediasiatica (strain FSC147)).